Reading from the N-terminus, the 216-residue chain is Protein Syd (216 aa).

It belongs to the Syd family.

Its subcellular location is the cell inner membrane. Interacts with the SecY protein in vivo. May bind preferentially to an uncomplexed state of SecY, thus functioning either as a chelating agent for excess SecY in the cell or as a regulatory factor that negatively controls the translocase function. This Shewanella sp. (strain W3-18-1) protein is Protein Syd.